The chain runs to 533 residues: Acid-sensing ion channel 2 (533 aa).

Residues 1-16 (MDLKEACGSEASRETE) show a composition bias toward basic and acidic residues. Residues 1–23 (MDLKEACGSEASRETESGGMGSL) are disordered. At 1-68 (MDLKEACGSE…STSRRLLWSA (68 aa)) the chain is on the cytoplasmic side. The helical transmembrane segment at 69–89 (ALLASLVLLVLESTERLAYFL) threads the bilayer. The Extracellular segment spans residues 90-445 (SYPHVTSVDA…ETIEQKKAYE (356 aa)). 6 cysteine pairs are disulfide-bonded: Cys113/Cys214, Cys310/Cys385, Cys328/Cys381, Cys332/Cys379, Cys341/Cys363, and Cys343/Cys355. N-linked (GlcNAc...) asparagine glycosylation occurs at Asn163. N-linked (GlcNAc...) asparagine glycosylation is found at Asn386 and Asn413. Residues 446-466 (VAGLLGDIGGQMGLFIGASIL) traverse the membrane as a helical segment. The GAS motif; ion selectivity filter signature appears at 462 to 464 (GAS). Topologically, residues 467 to 533 (TLLELFDYAY…TLGTLEEIAC (67 aa)) are cytoplasmic.

The protein belongs to the amiloride-sensitive sodium channel (TC 1.A.6) family. ASIC2 subfamily. Can form homotrimers; probably non-functional. Heterotrimer; could form functional heterotrimers producing channel with specific properties depending on their composition. Expressed in central nervous system.

The protein resides in the cell membrane. The catalysed reaction is Na(+)(in) = Na(+)(out). With respect to regulation, inhibited by the diuretic drug amiloride. Could form pH-gated heterotrimeric sodium channels that act as postsynaptic excitatory sensors in the nervous system, generating rapid, transient inward currents that fully desensitize upon extracellular acidification. This Danio rerio (Zebrafish) protein is Acid-sensing ion channel 2 (asic2).